We begin with the raw amino-acid sequence, 717 residues long: Delta-like protein D (717 aa).

The signal sequence occupies residues 1 to 19; it reads MGRLMIAVLLCVMISQGFC. The Extracellular segment spans residues 20–547; that stretch reads SGVFELKLQE…EEDDGGFPWT (528 aa). The DSL domain occupies 175–219; the sequence is FVCDEHYYGEGCSVFCRPRDDTFGHFTCGERGEIICNSGWKGQYC. Intrachain disulfides connect cysteine 177-cysteine 186, cysteine 190-cysteine 202, cysteine 210-cysteine 219, cysteine 224-cysteine 235, cysteine 228-cysteine 241, cysteine 243-cysteine 252, cysteine 261-cysteine 266, cysteine 274-cysteine 283, cysteine 290-cysteine 302, cysteine 296-cysteine 312, cysteine 314-cysteine 323, cysteine 330-cysteine 341, cysteine 335-cysteine 350, cysteine 352-cysteine 361, cysteine 368-cysteine 379, cysteine 373-cysteine 389, cysteine 391-cysteine 400, cysteine 407-cysteine 418, cysteine 412-cysteine 427, cysteine 429-cysteine 438, cysteine 445-cysteine 456, cysteine 450-cysteine 465, cysteine 467-cysteine 476, cysteine 483-cysteine 494, cysteine 488-cysteine 503, and cysteine 505-cysteine 514. EGF-like domains follow at residues 220–253, 257–284, and 286–324; these read TEPICLPGCDEDHGFCDKPGECKCRVGFSGKYCD, RYPGCLHGTCQQPWQCNCQEGWGGLFCN, and DLNYCTHHKPCQNGATCTNTGQGSYTCSCRPGFTGDSCE. One can recognise an EGF-like 4; calcium-binding domain in the interval 326–362; that stretch reads EVNECSGSPCRNGGSCTDLENTYSCTCPPGFYGRNCE. EGF-like domains lie at 364–401 and 403–439; these read SAMTCADGPCFNGGHCADNPEGGYFCQCPMGYAGFNCE and KIDHCSSNPCSNDAQCLDLVDSYLCQCPEGFTGTHCE. The EGF-like 7; calcium-binding domain maps to 441–477; the sequence is NIDECATYPCQNGGTCQDGLSDYTCTCPPGYTGKNCT. The N-linked (GlcNAc...) asparagine glycan is linked to asparagine 475. In terms of domain architecture, EGF-like 8 spans 479–515; the sequence is AVNKCLHNPCHNGATCHEMDNRYVCACIPGYGGRNCQ. A helical transmembrane segment spans residues 548–568; the sequence is AVCAGIILVLLVLIGGSVFVI. Over 569 to 717 the chain is Cytoplasmic; it reads YIRLKLQQRS…KDECIIATEV (149 aa). A disordered region spans residues 649 to 693; the sequence is EDLGKEDSERSEATKCEPLDSDSEEKHRNHLKSDSSERKRTESLC.

In terms of assembly, interacts with mib. Ubiquitinated by mib, leading to its endocytosis and subsequent degradation. Expressed in both mesodermal and neuroectodermal regions. In the developing nervous system, it is expressed in overlapping regions with deltaB (dlb) and deltaA (dla); in the neural plate, dld is expressed in patches of contiguous cells with dla, while dlb is confined to scattered cells within those patches that will differentiate as neurons. In somites, it marks the anterior part of each formed somite, while deltaC (dlc) marks the posterior part. In 24 hours embryos, expressed in the hindbrain in stripes adjacent to rhombomere boundaries, but not in the actual boundary cells.

Its subcellular location is the membrane. In terms of biological role, acts as a ligand for Notch receptors and is involved in primary neurogenesis and somitogenesis. Can activate Notch receptors, thereby playing a key role in lateral inhibition, a process that prevents the immediate neighbors of each nascent neural cell from simultaneously embarking on neural differentiation. Required in somite segmentation to keep the oscillations of neighboring presomitic mesoderm cells synchronized. In Danio rerio (Zebrafish), this protein is Delta-like protein D (dld).